A 458-amino-acid polypeptide reads, in one-letter code: Bifunctional protein GlmU (458 aa).

The interval 1–229 (MKEKALSIVI…FMEVEGVNNR (229 aa)) is pyrophosphorylase. UDP-N-acetyl-alpha-D-glucosamine-binding positions include 11 to 14 (LAAG), Lys-25, Gln-76, 81 to 82 (GT), 103 to 105 (YGD), Gly-140, Glu-154, Asn-169, and Asn-227. Position 105 (Asp-105) interacts with Mg(2+). Position 227 (Asn-227) interacts with Mg(2+). Positions 230–250 (QQLARLERYYQRKQADNLLLA) are linker. The N-acetyltransferase stretch occupies residues 251-458 (GVALADPERF…WQRPTKQTKK (208 aa)). UDP-N-acetyl-alpha-D-glucosamine contacts are provided by Arg-333 and Lys-351. His-363 functions as the Proton acceptor in the catalytic mechanism. UDP-N-acetyl-alpha-D-glucosamine contacts are provided by Tyr-366 and Asn-377. Acetyl-CoA contacts are provided by residues Ala-380, 386–387 (NY), Ser-405, Ala-423, and Arg-440.

It in the N-terminal section; belongs to the N-acetylglucosamine-1-phosphate uridyltransferase family. In the C-terminal section; belongs to the transferase hexapeptide repeat family. In terms of assembly, homotrimer. Mg(2+) is required as a cofactor.

It is found in the cytoplasm. It catalyses the reaction alpha-D-glucosamine 1-phosphate + acetyl-CoA = N-acetyl-alpha-D-glucosamine 1-phosphate + CoA + H(+). It carries out the reaction N-acetyl-alpha-D-glucosamine 1-phosphate + UTP + H(+) = UDP-N-acetyl-alpha-D-glucosamine + diphosphate. Its pathway is nucleotide-sugar biosynthesis; UDP-N-acetyl-alpha-D-glucosamine biosynthesis; N-acetyl-alpha-D-glucosamine 1-phosphate from alpha-D-glucosamine 6-phosphate (route II): step 2/2. It participates in nucleotide-sugar biosynthesis; UDP-N-acetyl-alpha-D-glucosamine biosynthesis; UDP-N-acetyl-alpha-D-glucosamine from N-acetyl-alpha-D-glucosamine 1-phosphate: step 1/1. It functions in the pathway bacterial outer membrane biogenesis; LPS lipid A biosynthesis. Functionally, catalyzes the last two sequential reactions in the de novo biosynthetic pathway for UDP-N-acetylglucosamine (UDP-GlcNAc). The C-terminal domain catalyzes the transfer of acetyl group from acetyl coenzyme A to glucosamine-1-phosphate (GlcN-1-P) to produce N-acetylglucosamine-1-phosphate (GlcNAc-1-P), which is converted into UDP-GlcNAc by the transfer of uridine 5-monophosphate (from uridine 5-triphosphate), a reaction catalyzed by the N-terminal domain. The polypeptide is Bifunctional protein GlmU (Pasteurella multocida (strain Pm70)).